The sequence spans 244 residues: Acetoacetate decarboxylase (244 aa).

The active-site Schiff-base intermediate with acetoacetate is the Lys115.

This sequence belongs to the ADC family.

The catalysed reaction is acetoacetate + H(+) = acetone + CO2. Catalyzes the conversion of acetoacetate to acetone and carbon dioxide. The sequence is that of Acetoacetate decarboxylase from Streptomyces nogalater.